The chain runs to 53 residues: GKVEFQGKKTKFDSDDERNENGAAGPVKRAREETDKEEPASKQQKTENGAGDQ.

Basic and acidic residues predominate over residues 1 to 13; sequence GKVEFQGKKTKFD. Residues 1–53 form a disordered region; the sequence is GKVEFQGKKTKFDSDDERNENGAAGPVKRAREETDKEEPASKQQKTENGAGDQ. At Lys-8 the chain carries N6-acetyllysine. Thr-10 carries the phosphothreonine modification. Ser-14 is subject to Phosphoserine. The span at 29–40 shows a compositional bias: basic and acidic residues; that stretch reads RAREETDKEEPA.

In terms of assembly, interacts with DDX15. May interact with RUFY1. Phosphorylated.

Its subcellular location is the nucleus. In terms of biological role, binds to the 3' poly(U) terminus of nascent RNA polymerase III transcripts, protecting them from exonuclease digestion and facilitating their folding and maturation. The polypeptide is Lupus La protein homolog (SSB) (Oryctolagus cuniculus (Rabbit)).